The sequence spans 186 residues: dCTP deaminase (186 aa).

107–112 is a binding site for dCTP; the sequence is KSTYAR. Glu-133 (proton donor/acceptor) is an active-site residue. DCTP-binding residues include Gln-152, Tyr-166, Lys-175, and Gln-176.

The protein belongs to the dCTP deaminase family. Homotrimer.

The enzyme catalyses dCTP + H2O + H(+) = dUTP + NH4(+). It functions in the pathway pyrimidine metabolism; dUMP biosynthesis; dUMP from dCTP (dUTP route): step 1/2. Its function is as follows. Catalyzes the deamination of dCTP to dUTP. In Wolinella succinogenes (strain ATCC 29543 / DSM 1740 / CCUG 13145 / JCM 31913 / LMG 7466 / NCTC 11488 / FDC 602W) (Vibrio succinogenes), this protein is dCTP deaminase.